A 106-amino-acid chain; its full sequence is UPF0145 protein PputGB1_2909 (106 aa).

The protein belongs to the UPF0145 family.

The polypeptide is UPF0145 protein PputGB1_2909 (Pseudomonas putida (strain GB-1)).